Reading from the N-terminus, the 380-residue chain is DNA primase small subunit PriS (380 aa).

Residues Asp103, Asp105, and Asp284 contribute to the active site.

This sequence belongs to the eukaryotic-type primase small subunit family. In terms of assembly, heterodimer of a small subunit (PriS) and a large subunit (PriL). The cofactor is Mg(2+). It depends on Mn(2+) as a cofactor.

In terms of biological role, catalytic subunit of DNA primase, an RNA polymerase that catalyzes the synthesis of short RNA molecules used as primers for DNA polymerase during DNA replication. The small subunit contains the primase catalytic core and has DNA synthesis activity on its own. Binding to the large subunit stabilizes and modulates the activity, increasing the rate of DNA synthesis while decreasing the length of the DNA fragments, and conferring RNA synthesis capability. The DNA polymerase activity may enable DNA primase to also catalyze primer extension after primer synthesis. May also play a role in DNA repair. The protein is DNA primase small subunit PriS of Methanocorpusculum labreanum (strain ATCC 43576 / DSM 4855 / Z).